Consider the following 545-residue polypeptide: CTP synthase (545 aa).

The interval 1–266 is amidoligase domain; it reads MTTNYIFVTG…DDYICKRFSL (266 aa). CTP is bound at residue Ser-14. Ser-14 provides a ligand contact to UTP. ATP is bound by residues 15–20 and Asp-72; that span reads SLGKGI. Mg(2+) is bound by residues Asp-72 and Glu-140. Residues 147–149, 187–192, and Lys-223 contribute to the CTP site; these read DIE and KTKPTQ. UTP-binding positions include 187–192 and Lys-223; that span reads KTKPTQ. An ATP-binding site is contributed by 239 to 241; it reads KDV. Residues 291–542 form the Glutamine amidotransferase type-1 domain; sequence TIGMIGKYVE…VKAAGEYQKR (252 aa). Gly-352 serves as a coordination point for L-glutamine. Cys-379 functions as the Nucleophile; for glutamine hydrolysis in the catalytic mechanism. L-glutamine contacts are provided by residues 380–383, Glu-403, and Arg-470; that span reads LGMQ. Catalysis depends on residues His-515 and Glu-517.

It belongs to the CTP synthase family. In terms of assembly, homotetramer.

The enzyme catalyses UTP + L-glutamine + ATP + H2O = CTP + L-glutamate + ADP + phosphate + 2 H(+). It carries out the reaction L-glutamine + H2O = L-glutamate + NH4(+). It catalyses the reaction UTP + NH4(+) + ATP = CTP + ADP + phosphate + 2 H(+). The protein operates within pyrimidine metabolism; CTP biosynthesis via de novo pathway; CTP from UDP: step 2/2. Its activity is regulated as follows. Allosterically activated by GTP, when glutamine is the substrate; GTP has no effect on the reaction when ammonia is the substrate. The allosteric effector GTP functions by stabilizing the protein conformation that binds the tetrahedral intermediate(s) formed during glutamine hydrolysis. Inhibited by the product CTP, via allosteric rather than competitive inhibition. Functionally, catalyzes the ATP-dependent amination of UTP to CTP with either L-glutamine or ammonia as the source of nitrogen. Regulates intracellular CTP levels through interactions with the four ribonucleotide triphosphates. This is CTP synthase from Yersinia enterocolitica serotype O:8 / biotype 1B (strain NCTC 13174 / 8081).